An 844-amino-acid chain; its full sequence is Serrate RNA effector molecule homolog B (844 aa).

Disordered stretches follow at residues 1-90, 277-401, 555-575, and 794-825; these read MADS…HGSD, EAAK…PRPL, ELLS…GNPT, and PNPY…MRGD. Composition is skewed to basic and acidic residues over residues 16 to 73 and 277 to 337; these read FRRE…RHDI and EAAK…ETRK. Residues 349–359 are compositionally biased toward acidic residues; the sequence is SDDGSDSESDT. Over residues 376–397 the composition is skewed to basic and acidic residues; sequence DTPKKEEETEKPKEKPKEDTVK.

This sequence belongs to the ARS2 family. Interacts ncbp1/cbp80.

It is found in the nucleus. Its subcellular location is the nucleoplasm. The protein localises to the cytoplasm. Functionally, acts as a mediator between the cap-binding complex (CBC) and the primary microRNAs (miRNAs) processing machinery during cell proliferation. Contributes to the stability and delivery of capped primary miRNA transcripts to the primary miRNA processing complex, thereby playing a role in RNA-mediated gene silencing (RNAi) by miRNAs. The polypeptide is Serrate RNA effector molecule homolog B (srrt-b) (Xenopus laevis (African clawed frog)).